We begin with the raw amino-acid sequence, 73 residues long: UPF0435 protein lwe1727 (73 aa).

This sequence belongs to the UPF0435 family.

In Listeria welshimeri serovar 6b (strain ATCC 35897 / DSM 20650 / CCUG 15529 / CIP 8149 / NCTC 11857 / SLCC 5334 / V8), this protein is UPF0435 protein lwe1727.